A 427-amino-acid polypeptide reads, in one-letter code: ATP synthase subunit beta (427 aa).

ATP is bound at residue 160–167 (GGAGVGKT).

Belongs to the ATPase alpha/beta chains family. In terms of assembly, F-type ATPases have 2 components, CF(1) - the catalytic core - and CF(0) - the membrane proton channel. CF(1) has five subunits: alpha(3), beta(3), gamma(1), delta(1), epsilon(1). CF(0) has three main subunits: a(1), b(2) and c(9-12). The alpha and beta chains form an alternating ring which encloses part of the gamma chain. CF(1) is attached to CF(0) by a central stalk formed by the gamma and epsilon chains, while a peripheral stalk is formed by the delta and b chains.

The protein localises to the cell membrane. It catalyses the reaction ATP + H2O + 4 H(+)(in) = ADP + phosphate + 5 H(+)(out). Its function is as follows. Produces ATP from ADP in the presence of a proton gradient across the membrane. The catalytic sites are hosted primarily by the beta subunits. This is ATP synthase subunit beta from Peptococcus niger.